Reading from the N-terminus, the 480-residue chain is Proline--tRNA ligase (480 aa).

It belongs to the class-II aminoacyl-tRNA synthetase family. ProS type 3 subfamily. As to quaternary structure, homodimer.

The protein localises to the cytoplasm. The enzyme catalyses tRNA(Pro) + L-proline + ATP = L-prolyl-tRNA(Pro) + AMP + diphosphate. Its function is as follows. Catalyzes the attachment of proline to tRNA(Pro) in a two-step reaction: proline is first activated by ATP to form Pro-AMP and then transferred to the acceptor end of tRNA(Pro). In Metallosphaera sedula (strain ATCC 51363 / DSM 5348 / JCM 9185 / NBRC 15509 / TH2), this protein is Proline--tRNA ligase.